The sequence spans 193 residues: dCTP deaminase (193 aa).

Residues 110–115 (RSSLAR), aspartate 128, 136–138 (VLE), tyrosine 171, lysine 178, and glutamine 182 contribute to the dCTP site. Residue glutamate 138 is the Proton donor/acceptor of the active site. Residues 169–193 (RPYNRRQDAKYRDQQGAVASRIDKD) are disordered.

The protein belongs to the dCTP deaminase family. In terms of assembly, homotrimer.

The catalysed reaction is dCTP + H2O + H(+) = dUTP + NH4(+). It participates in pyrimidine metabolism; dUMP biosynthesis; dUMP from dCTP (dUTP route): step 1/2. Functionally, catalyzes the deamination of dCTP to dUTP. The polypeptide is dCTP deaminase (Citrobacter koseri (strain ATCC BAA-895 / CDC 4225-83 / SGSC4696)).